Reading from the N-terminus, the 896-residue chain is Translation initiation factor IF-2 (896 aa).

2 disordered regions span residues 53 to 81 and 117 to 301; these read HGGESAPTKMTLQRKSVSTLSVGSGSASK and AEEA…ESMD. Positions 60-79 are enriched in polar residues; the sequence is TKMTLQRKSVSTLSVGSGSA. Basic and acidic residues predominate over residues 117–227; that stretch reads AEEAASKAKA…ESEKTGDHHV (111 aa). The span at 254-266 shows a compositional bias: low complexity; sequence ATPAPAAAPANTG. The span at 273–282 shows a compositional bias: basic and acidic residues; sequence GKDNRRDSRN. Positions 283–294 are enriched in low complexity; sequence ARGGRNARNNRS. Residues 394 to 563 enclose the tr-type G domain; it reads SRAPVVTIMG…LLEAEVLELK (170 aa). Residues 403-410 are G1; that stretch reads GHVDHGKT. GTP is bound at residue 403-410; the sequence is GHVDHGKT. Residues 428 to 432 form a G2 region; that stretch reads GITQH. The segment at 449–452 is G3; the sequence is DTPG. GTP-binding positions include 449-453 and 503-506; these read DTPGH and NKID. A G4 region spans residues 503–506; it reads NKID. The tract at residues 539 to 541 is G5; that stretch reads SAK.

The protein belongs to the TRAFAC class translation factor GTPase superfamily. Classic translation factor GTPase family. IF-2 subfamily.

Its subcellular location is the cytoplasm. Its function is as follows. One of the essential components for the initiation of protein synthesis. Protects formylmethionyl-tRNA from spontaneous hydrolysis and promotes its binding to the 30S ribosomal subunits. Also involved in the hydrolysis of GTP during the formation of the 70S ribosomal complex. The chain is Translation initiation factor IF-2 from Shewanella sediminis (strain HAW-EB3).